A 149-amino-acid polypeptide reads, in one-letter code: Transcriptional repressor NrdR (149 aa).

A zinc finger lies at 3-34 (CPFCAAVDTKVIDSRLVSDGSQVRRRRQCLDC). An ATP-cone domain is found at 49 to 139 (PRVIKSDEVR…VYRSFEDVRE (91 aa)).

The protein belongs to the NrdR family. Requires Zn(2+) as cofactor.

Functionally, negatively regulates transcription of bacterial ribonucleotide reductase nrd genes and operons by binding to NrdR-boxes. This chain is Transcriptional repressor NrdR, found in Yersinia pseudotuberculosis serotype O:1b (strain IP 31758).